An 83-amino-acid chain; its full sequence is MSSGGLLLLLGLLTLWEVLTPVSSKDRPDFCELPADTGPCRVRFPSFYYNPDEKKCLEFIYGGCEGNANNFITKEECESTCAA.

Positions 1 to 24 (MSSGGLLLLLGLLTLWEVLTPVSS) are cleaved as a signal peptide. In terms of domain architecture, BPTI/Kunitz inhibitor spans 31–81 (CELPADTGPCRVRFPSFYYNPDEKKCLEFIYGGCEGNANNFITKEECESTC). 3 cysteine pairs are disulfide-bonded: C31–C81, C40–C64, and C56–C77.

This sequence belongs to the venom Kunitz-type family. In terms of tissue distribution, expressed by the venom gland.

Its subcellular location is the secreted. Strongly inhibits plasmin (Ki=0.44 nM) and trypsin (Ki=0.42 nM). Has little effect on plasma (Ki=1870 nM) and tissue (Ki=12900 nM) kallikreins. Its plasmin-inhibiting activity makes it an antifibrinolytic agent. In vivo, reduces blood loss in a mouse tail vein bleeding model. This Pseudonaja textilis textilis (Eastern brown snake) protein is Kunitz-type serine protease inhibitor textilinin-1.